Consider the following 357-residue polypeptide: Holliday junction branch migration complex subunit RuvB (357 aa).

Positions 1–27 (MGRFDDAGAQDAEPDDRDVSPALTVGE) are disordered. Positions 1 to 195 (MGRFDDAGAQ…FGFTAHMDFY (195 aa)) are large ATPase domain (RuvB-L). ATP contacts are provided by residues Leu-34, Arg-35, Gly-76, Lys-79, Thr-80, Ser-81, 142–144 (EDF), Arg-185, Tyr-195, and Arg-232. Thr-80 is a binding site for Mg(2+). Residues 196-266 (EPAELERVLA…IAKAALEVYD (71 aa)) form a small ATPAse domain (RuvB-S) region. Residues 269–357 (ELGLDRLDRA…TGLGQTGLFD (89 aa)) form a head domain (RuvB-H) region. DNA-binding residues include Arg-324 and Arg-329.

The protein belongs to the RuvB family. In terms of assembly, homohexamer. Forms an RuvA(8)-RuvB(12)-Holliday junction (HJ) complex. HJ DNA is sandwiched between 2 RuvA tetramers; dsDNA enters through RuvA and exits via RuvB. An RuvB hexamer assembles on each DNA strand where it exits the tetramer. Each RuvB hexamer is contacted by two RuvA subunits (via domain III) on 2 adjacent RuvB subunits; this complex drives branch migration. In the full resolvosome a probable DNA-RuvA(4)-RuvB(12)-RuvC(2) complex forms which resolves the HJ.

Its subcellular location is the cytoplasm. It catalyses the reaction ATP + H2O = ADP + phosphate + H(+). Functionally, the RuvA-RuvB-RuvC complex processes Holliday junction (HJ) DNA during genetic recombination and DNA repair, while the RuvA-RuvB complex plays an important role in the rescue of blocked DNA replication forks via replication fork reversal (RFR). RuvA specifically binds to HJ cruciform DNA, conferring on it an open structure. The RuvB hexamer acts as an ATP-dependent pump, pulling dsDNA into and through the RuvAB complex. RuvB forms 2 homohexamers on either side of HJ DNA bound by 1 or 2 RuvA tetramers; 4 subunits per hexamer contact DNA at a time. Coordinated motions by a converter formed by DNA-disengaged RuvB subunits stimulates ATP hydrolysis and nucleotide exchange. Immobilization of the converter enables RuvB to convert the ATP-contained energy into a lever motion, pulling 2 nucleotides of DNA out of the RuvA tetramer per ATP hydrolyzed, thus driving DNA branch migration. The RuvB motors rotate together with the DNA substrate, which together with the progressing nucleotide cycle form the mechanistic basis for DNA recombination by continuous HJ branch migration. Branch migration allows RuvC to scan DNA until it finds its consensus sequence, where it cleaves and resolves cruciform DNA. This chain is Holliday junction branch migration complex subunit RuvB, found in Mycobacterium sp. (strain JLS).